Consider the following 294-residue polypeptide: MGDFGTVLTAMITPFKADGSVNYAVAAELAANLVDNGTDTLVVCGTTGESPTLSWDEEYNLFVEVLQTVAGKAKVIAGCGSNSTKEAIAATQKAAKIGVHGTLQVVPYYNKPPQAGLYQHFQAIAQACPELPLLLYNVPGRTGQNLSPETVVRLAEIDNIVGVKEASGNLDQAGEIRRLTPKEFQIYAGDDSLTLPLLAIGAKGVVSVASHLVGNQLQQMIQAFNSGQVTVASDIHLRLLPLFKTLFITTNPIPIKQALKLQGWEVGSTRPPLSDADAEVSQKLEAVMKHLDLI.

Position 47 (threonine 47) interacts with pyruvate. The active-site Proton donor/acceptor is the tyrosine 136. Lysine 164 acts as the Schiff-base intermediate with substrate in catalysis. Residue valine 206 participates in pyruvate binding.

Belongs to the DapA family. In terms of assembly, homotetramer; dimer of dimers.

It localises to the cytoplasm. It catalyses the reaction L-aspartate 4-semialdehyde + pyruvate = (2S,4S)-4-hydroxy-2,3,4,5-tetrahydrodipicolinate + H2O + H(+). It participates in amino-acid biosynthesis; L-lysine biosynthesis via DAP pathway; (S)-tetrahydrodipicolinate from L-aspartate: step 3/4. Catalyzes the condensation of (S)-aspartate-beta-semialdehyde [(S)-ASA] and pyruvate to 4-hydroxy-tetrahydrodipicolinate (HTPA). The protein is 4-hydroxy-tetrahydrodipicolinate synthase of Nostoc sp. (strain PCC 7120 / SAG 25.82 / UTEX 2576).